The chain runs to 298 residues: 4-hydroxy-tetrahydrodipicolinate synthase (298 aa).

Thr-48 lines the pyruvate pocket. Tyr-137 (proton donor/acceptor) is an active-site residue. The Schiff-base intermediate with substrate role is filled by Lys-166. Ile-207 lines the pyruvate pocket.

It belongs to the DapA family. As to quaternary structure, homotetramer; dimer of dimers.

It localises to the cytoplasm. The catalysed reaction is L-aspartate 4-semialdehyde + pyruvate = (2S,4S)-4-hydroxy-2,3,4,5-tetrahydrodipicolinate + H2O + H(+). It functions in the pathway amino-acid biosynthesis; L-lysine biosynthesis via DAP pathway; (S)-tetrahydrodipicolinate from L-aspartate: step 3/4. Functionally, catalyzes the condensation of (S)-aspartate-beta-semialdehyde [(S)-ASA] and pyruvate to 4-hydroxy-tetrahydrodipicolinate (HTPA). The polypeptide is 4-hydroxy-tetrahydrodipicolinate synthase (Campylobacter jejuni subsp. doylei (strain ATCC BAA-1458 / RM4099 / 269.97)).